A 913-amino-acid chain; its full sequence is Isoleucine--tRNA ligase (913 aa).

The 'HIGH' region signature appears at Pro57 to Thr67. Residue Glu549 coordinates L-isoleucyl-5'-AMP. The 'KMSKS' region motif lies at Lys590–Ser594. An ATP-binding site is contributed by Lys593. 4 residues coordinate Zn(2+): Cys881, Cys884, Cys901, and Cys904.

The protein belongs to the class-I aminoacyl-tRNA synthetase family. IleS type 1 subfamily. In terms of assembly, monomer. The cofactor is Zn(2+).

It is found in the cytoplasm. The catalysed reaction is tRNA(Ile) + L-isoleucine + ATP = L-isoleucyl-tRNA(Ile) + AMP + diphosphate. Functionally, catalyzes the attachment of isoleucine to tRNA(Ile). As IleRS can inadvertently accommodate and process structurally similar amino acids such as valine, to avoid such errors it has two additional distinct tRNA(Ile)-dependent editing activities. One activity is designated as 'pretransfer' editing and involves the hydrolysis of activated Val-AMP. The other activity is designated 'posttransfer' editing and involves deacylation of mischarged Val-tRNA(Ile). This chain is Isoleucine--tRNA ligase, found in Fervidobacterium nodosum (strain ATCC 35602 / DSM 5306 / Rt17-B1).